Here is a 186-residue protein sequence, read N- to C-terminus: MIGPPVNLPKWLEENSHLLKPPINNYCVYNGDFTVMIVGGPNARTDYHINTTPEWFYQHRGAMTLKIVDPTEGNNTFRDIVIREGDMFLLPANTPHNPVRFADTVGIVLEQKRPAGSLDRMRWYCQREGCGAVVKEAAFHCTDLGTQIKEAVEAFKADEEGRRCKQCGEVAEWCPKPGSIRDPNLE.

Position 44 (Arg-44) interacts with O2. The Fe cation site is built by His-48, Glu-54, and His-96. Glu-54 contributes to the substrate binding site. The substrate site is built by Arg-100 and Glu-110. Cys-125, Cys-130, Cys-164, and Cys-167 together coordinate a divalent metal cation.

The protein belongs to the 3-HAO family. Requires Fe(2+) as cofactor.

It is found in the cytoplasm. The catalysed reaction is 3-hydroxyanthranilate + O2 = (2Z,4Z)-2-amino-3-carboxymuconate 6-semialdehyde. Its pathway is cofactor biosynthesis; NAD(+) biosynthesis; quinolinate from L-kynurenine: step 3/3. Functionally, catalyzes the oxidative ring opening of 3-hydroxyanthranilate to 2-amino-3-carboxymuconate semialdehyde, which spontaneously cyclizes to quinolinate. In Chaetomium globosum (strain ATCC 6205 / CBS 148.51 / DSM 1962 / NBRC 6347 / NRRL 1970) (Soil fungus), this protein is 3-hydroxyanthranilate 3,4-dioxygenase.